The sequence spans 280 residues: Inner membrane ABC transporter permease protein YcjP (280 aa).

Over 1 to 10 the chain is Cytoplasmic; sequence MATNKRTLSR. Residues 11-31 form a helical membrane-spanning segment; sequence IGFYCGLALFLIITLFPFFVM. Residues 32–53 are Periplasmic-facing; sequence LMTSFKGAKEAISLHPTLLPQQ. A helical membrane pass occupies residues 54–74; that stretch reads WTLEHYVDIFNPMIFPFVDYF. One can recognise an ABC transmembrane type-1 domain in the interval 74–265; it reads FRNSLVVSVV…LPVVIMYALS (192 aa). Topologically, residues 75–77 are cytoplasmic; it reads RNS. Residues 78-98 traverse the membrane as a helical segment; that stretch reads LVVSVVSSVVAVFLGILGAYA. At 99-117 the chain is on the periplasmic side; the sequence is LSRLRFKGRMTINASFYTV. The chain crosses the membrane as a helical span at residues 118 to 138; it reads YMFSGILLVVPLFKIITALGI. The Cytoplasmic portion of the chain corresponds to 139-140; that stretch reads YD. Residues 141 to 161 traverse the membrane as a helical segment; it reads TEMALIITMVTQTLPTAVFML. The Periplasmic portion of the chain corresponds to 162-189; that stretch reads KSYFDTIPDEIEEAAMMDGLNRLQIIFR. A helical membrane pass occupies residues 190–210; sequence ITVPLAMSGLISVFVYCFMVA. Residues 211-214 are Cytoplasmic-facing; sequence WNDY. A helical membrane pass occupies residues 215–235; that stretch reads LFASIFLSSASNFTLPVGLNA. Topologically, residues 236–242 are periplasmic; sequence LFSTPDY. Residues 243-263 traverse the membrane as a helical segment; sequence IWGRMMAASLVTALPVVIMYA. Residues 264-280 are Cytoplasmic-facing; the sequence is LSERFIKSGLTAGGVKG.

The protein belongs to the binding-protein-dependent transport system permease family. MalFG subfamily.

The protein localises to the cell inner membrane. Probably part of the binding-protein-dependent transport system YcjNOP. Probably responsible for the translocation of the substrate across the membrane. The polypeptide is Inner membrane ABC transporter permease protein YcjP (ycjP) (Escherichia coli (strain K12)).